A 289-amino-acid polypeptide reads, in one-letter code: Ribosomal RNA small subunit methyltransferase I (289 aa).

The protein belongs to the methyltransferase superfamily. RsmI family.

Its subcellular location is the cytoplasm. The enzyme catalyses cytidine(1402) in 16S rRNA + S-adenosyl-L-methionine = 2'-O-methylcytidine(1402) in 16S rRNA + S-adenosyl-L-homocysteine + H(+). Its function is as follows. Catalyzes the 2'-O-methylation of the ribose of cytidine 1402 (C1402) in 16S rRNA. The chain is Ribosomal RNA small subunit methyltransferase I from Halalkalibacterium halodurans (strain ATCC BAA-125 / DSM 18197 / FERM 7344 / JCM 9153 / C-125) (Bacillus halodurans).